Reading from the N-terminus, the 249-residue chain is Small ribosomal subunit protein eS6 (249 aa).

Residues 216–229 (RMKEAKEKRQEQIA) are compositionally biased toward basic and acidic residues. The disordered stretch occupies residues 216–249 (RMKEAKEKRQEQIAKRRRLSSLRASTSKSESSQK). 5 positions are modified to phosphoserine: S235, S236, S240, S244, and S247. A compositionally biased stretch (low complexity) spans 236–249 (SLRASTSKSESSQK).

This sequence belongs to the eukaryotic ribosomal protein eS6 family. As to quaternary structure, component of the small ribosomal subunit. Part of the small subunit (SSU) processome, composed of more than 70 proteins and the RNA chaperone small nucleolar RNA (snoRNA) U3. Post-translationally, ribosomal protein S6 is the major substrate of protein kinases in eukaryote ribosomes. The phosphorylation is stimulated by growth factors, tumor promoting agents, and mitogens. It is dephosphorylated at growth arrest.

The protein localises to the cytoplasm. The protein resides in the nucleus. It is found in the nucleolus. Component of the 40S small ribosomal subunit. Plays an important role in controlling cell growth and proliferation through the selective translation of particular classes of mRNA. Part of the small subunit (SSU) processome, first precursor of the small eukaryotic ribosomal subunit. During the assembly of the SSU processome in the nucleolus, many ribosome biogenesis factors, an RNA chaperone and ribosomal proteins associate with the nascent pre-rRNA and work in concert to generate RNA folding, modifications, rearrangements and cleavage as well as targeted degradation of pre-ribosomal RNA by the RNA exosome. This chain is Small ribosomal subunit protein eS6 (RPS6), found in Gallus gallus (Chicken).